Here is a 198-residue protein sequence, read N- to C-terminus: Endonuclease V (198 aa).

Mg(2+) is bound by residues aspartate 38 and aspartate 101.

This sequence belongs to the endonuclease V family. Mg(2+) is required as a cofactor.

It localises to the cytoplasm. The enzyme catalyses Endonucleolytic cleavage at apurinic or apyrimidinic sites to products with a 5'-phosphate.. Its function is as follows. DNA repair enzyme involved in the repair of deaminated bases. Selectively cleaves double-stranded DNA at the second phosphodiester bond 3' to a deoxyinosine leaving behind the intact lesion on the nicked DNA. The sequence is that of Endonuclease V from Saccharolobus islandicus (strain M.16.27) (Sulfolobus islandicus).